A 462-amino-acid polypeptide reads, in one-letter code: Protein MOS2 (462 aa).

Over residues 1–10 the composition is skewed to low complexity; the sequence is MKLSFSLPSK. The segment at 1–32 is disordered; that stretch reads MKLSFSLPSKSKPKVTATTADGNNAVDDGTSK. One can recognise a G-patch domain in the interval 156-202; it reads VDGFGAALMAGYGWKPGKGIGKNAKEDVEIKEYKKWTAKEGLGFDPD. In terms of domain architecture, KOW 1 spans 231-258; sequence VFFVGKEVRIIAGRDVGLKGKIVEKPGS. Residues 301-336 show a composition bias toward basic and acidic residues; sequence DREKDKKTSGRGRGAERGSRSEVRASEKQDRGQTRE. Residues 301–340 form a disordered region; it reads DREKDKKTSGRGRGAERGSRSEVRASEKQDRGQTRERKVK. Residues 401–428 form the KOW 2 domain; the sequence is LPRRGGPVLVLSGKHKGVYGNLVEKDLD.

It belongs to the MOS2 family.

It localises to the nucleus. Its function is as follows. Required for innate and induced resistance to pathogens such as compatible and incompatible isolates of P.syringae and P.parasitica. In Arabidopsis thaliana (Mouse-ear cress), this protein is Protein MOS2 (MOS2).